The chain runs to 90 residues: Small ribosomal subunit protein uS15 (90 aa).

Belongs to the universal ribosomal protein uS15 family. As to quaternary structure, part of the 30S ribosomal subunit. Forms a bridge to the 50S subunit in the 70S ribosome, contacting the 23S rRNA.

One of the primary rRNA binding proteins, it binds directly to 16S rRNA where it helps nucleate assembly of the platform of the 30S subunit by binding and bridging several RNA helices of the 16S rRNA. Its function is as follows. Forms an intersubunit bridge (bridge B4) with the 23S rRNA of the 50S subunit in the ribosome. This is Small ribosomal subunit protein uS15 from Herpetosiphon aurantiacus (strain ATCC 23779 / DSM 785 / 114-95).